The following is a 776-amino-acid chain: Genome polyprotein (776 aa).

Residues 1–27 are disordered; sequence MAGKAVLKGKGGGPPRRASKVAPKKTR. The Cytoplasmic portion of the chain corresponds to 1 to 98; it reads MAGKAVLKGK…LHRRGSRRTT (98 aa). A compositionally biased stretch (basic residues) spans 17 to 27; it reads RASKVAPKKTR. Residues 33–68 form a hydrophobic; homodimerization of capsid protein C region; that stretch reads MPNGLVLMRMLGVLWHALTGTARSPVLKAFWKVVPL. Residues 97–117 constitute a propeptide, ER anchor for the protein C, removed in mature form by serine protease NS3; that stretch reads TTIDWMTPLLITVMLGMCLTA. Residues 99–117 form a helical membrane-spanning segment; it reads IDWMTPLLITVMLGMCLTA. The Extracellular segment spans residues 118–242; sequence TVRRERDGSM…HLTRVEGWVW (125 aa). An N-linked (GlcNAc...) asparagine; by host glycan is attached at Asn-144. A helical transmembrane segment spans residues 243–260; it reads KNKLFTLSLVMVAWLMVD. Gly-261 is a topological domain (cytoplasmic). Residues 262-280 traverse the membrane as a helical segment; that stretch reads LLPRILIVVVALALVPAYA. Residues 281–727 are Extracellular-facing; sequence SRCTHLENRD…HTVLGGAFNT (447 aa). 4 disulfides stabilise this stretch: Cys-283–Cys-310, Cys-340–Cys-396, Cys-354–Cys-385, and Cys-372–Cys-401. N-linked (GlcNAc...) asparagine; by host glycosylation occurs at Asn-434. 2 disulfides stabilise this stretch: Cys-466–Cys-570 and Cys-587–Cys-618. The helical intramembrane region spans 728-748; sequence LLGGVGFLPKILLGVAMAWLG. Residues 749 to 755 are Extracellular-facing; it reads LNMRNPT. The helical intramembrane region spans 756 to 776; it reads LSMGFLLSGGLVLAMTLGVGA.

Post-translationally, specific enzymatic cleavages in vivo yield mature proteins Peptide 2K acts as a signal sequence and is removed from the N-terminus of NS4B by the host signal peptidase in the ER lumen. Signal cleavage at the 2K-4B site requires a prior NS3 protease-mediated cleavage at the 4A-2K site.

It localises to the virion. It is found in the secreted. The protein localises to the virion membrane. Its subcellular location is the host endoplasmic reticulum membrane. Its function is as follows. Capsid protein C self-assembles to form an icosahedral capsid about 30 nm in diameter. The capsid encapsulates the genomic RNA. In terms of biological role, prM acts as a chaperone for envelope protein E during intracellular virion assembly by masking and inactivating envelope protein E fusion peptide. prM is matured in the last step of virion assembly, presumably to avoid catastrophic activation of the viral fusion peptide induced by the acidic pH of the trans-Golgi network. After cleavage by host furin, the pr peptide is released in the extracellular medium and small envelope protein M and envelope protein E homodimers are dissociated. Functionally, envelope protein E binding to host cell surface receptor is followed by virus internalization through clathrin-mediated endocytosis. Envelope protein E is subsequently involved in membrane fusion between virion and host late endosomes. Synthesized as a homodimer with prM which acts as a chaperone for envelope protein E. After cleavage of prM, envelope protein E dissociate from small envelope protein M and homodimerizes. This is Genome polyprotein from Homo sapiens (Human).